The chain runs to 1074 residues: Probable phospholipid-transporting ATPase tat-5 (1074 aa).

A disordered region spans residues 1 to 26 (MGKRKKNDESSSSSSQKPCVSSSSDD). A compositionally biased stretch (low complexity) spans 10–26 (SSSSSSQKPCVSSSSDD). 4 helical membrane-spanning segments follow: residues 118 to 138 (FVPIVLFQQFKFFLNLYFLLM), 143 to 163 (FIPAIQIGAPITYWGPLGFVL), 354 to 374 (LTKLLFCFVLVLSSVMVAMKG), and 378 to 398 (LWYRYLMRFILLFSYIIPISL). Asp442 serves as the catalytic 4-aspartylphosphate intermediate. ATP contacts are provided by Asp442, Lys443, Thr444, Glu524, Phe570, Lys575, Lys594, Arg623, Thr624, Thr704, Gly705, Asp706, Arg786, and Lys792. Position 442 (Asp442) interacts with Mg(2+). Residue Thr444 coordinates Mg(2+). Asp813 is a Mg(2+) binding site. The ATP site is built by Asn816 and Asp817. Residue Asp817 participates in Mg(2+) binding. 5 helical membrane-spanning segments follow: residues 886 to 906 (AIFSCVFYFASVSLYQGVLMV), 954 to 974 (IWVLISLYQGAVIMYGALLVF), 978 to 998 (FIHVVSISFSALIVTELIMVA), 1006 to 1026 (WAMLLAQALSLGLYMISLILF), and 1038 to 1058 (WVFISKTTAITAVSCLPLYIV).

Belongs to the cation transport ATPase (P-type) (TC 3.A.3) family. Type IV subfamily. Mg(2+) serves as cofactor.

It localises to the cell membrane. The catalysed reaction is ATP + H2O + phospholipidSide 1 = ADP + phosphate + phospholipidSide 2.. Plays a role in regulating membrane trafficking of cargo proteins during embryogenesis. Regulates snx-3 retromer-mediated endosomal sorting of mig-14, a transporter of Wnt egl-20 morphogen. Together with mon-2 and pad-1, may participate in the formation of endosomal carriers that direct mig-14 trafficking back to Golgi, away from lysosomal degradation. Required for Wnt egl-20 gradient formation along the anteroposterior body axis and migration of QL neuroblast descendants toward the posterior part. Maintains phosphatidylethanolamine (PE) asymmetry at the cell membrane and prevents the budding of ectosome vesicles that affect intercellular communication and morphogenesis. This chain is Probable phospholipid-transporting ATPase tat-5 (tat-5), found in Caenorhabditis elegans.